An 81-amino-acid polypeptide reads, in one-letter code: Acyl carrier protein (81 aa).

The 76-residue stretch at 2-77 (ASIEERVVDI…EAIDFIEKEK (76 aa)) folds into the Carrier domain. At Ser37 the chain carries O-(pantetheine 4'-phosphoryl)serine.

This sequence belongs to the acyl carrier protein (ACP) family. 4'-phosphopantetheine is transferred from CoA to a specific serine of apo-ACP by AcpS. This modification is essential for activity because fatty acids are bound in thioester linkage to the sulfhydryl of the prosthetic group.

Its subcellular location is the cytoplasm. It participates in lipid metabolism; fatty acid biosynthesis. Carrier of the growing fatty acid chain in fatty acid biosynthesis. This Rhodopirellula baltica (strain DSM 10527 / NCIMB 13988 / SH1) protein is Acyl carrier protein.